The following is a 124-amino-acid chain: Small ribosomal subunit protein uS12 (124 aa).

The disordered stretch occupies residues 1-24 (MPTINQLVRRPRKPSVSANKAPAL). At aspartate 90 the chain carries 3-methylthioaspartic acid.

Belongs to the universal ribosomal protein uS12 family. As to quaternary structure, part of the 30S ribosomal subunit. Contacts proteins S8 and S17. May interact with IF1 in the 30S initiation complex.

In terms of biological role, with S4 and S5 plays an important role in translational accuracy. Functionally, interacts with and stabilizes bases of the 16S rRNA that are involved in tRNA selection in the A site and with the mRNA backbone. Located at the interface of the 30S and 50S subunits, it traverses the body of the 30S subunit contacting proteins on the other side and probably holding the rRNA structure together. The combined cluster of proteins S8, S12 and S17 appears to hold together the shoulder and platform of the 30S subunit. The sequence is that of Small ribosomal subunit protein uS12 from Anaplasma phagocytophilum (strain HZ).